Consider the following 386-residue polypeptide: S-adenosylmethionine synthase (386 aa).

Glutamate 8 contributes to the Mg(2+) binding site. ATP is bound at residue histidine 14. Glutamate 42 is a binding site for K(+). L-methionine-binding residues include glutamate 55 and glutamine 98. ATP-binding positions include 166–168, 234–237, aspartate 245, 251–252, alanine 268, lysine 272, and lysine 276; these read DGK, SGRF, and RK. Aspartate 245 lines the L-methionine pocket. Lysine 276 contributes to the L-methionine binding site.

Belongs to the AdoMet synthase family. Homotetramer. Mn(2+) is required as a cofactor. Mg(2+) serves as cofactor. Requires Co(2+) as cofactor. It depends on K(+) as a cofactor.

Its subcellular location is the cytoplasm. It catalyses the reaction L-methionine + ATP + H2O = S-adenosyl-L-methionine + phosphate + diphosphate. It functions in the pathway amino-acid biosynthesis; S-adenosyl-L-methionine biosynthesis; S-adenosyl-L-methionine from L-methionine: step 1/1. Catalyzes the formation of S-adenosylmethionine from methionine and ATP. The reaction comprises two steps that are both catalyzed by the same enzyme: formation of S-adenosylmethionine (AdoMet) and triphosphate, and subsequent hydrolysis of the triphosphate. The chain is S-adenosylmethionine synthase (METK) from Ostreococcus tauri.